Here is a 78-residue protein sequence, read N- to C-terminus: Sec-independent protein translocase protein TatA (78 aa).

The helical transmembrane segment at 1 to 21 (MGSLSIWHWIVVIAVVLLLFG) threads the bilayer. Residues 43–60 (LQDDEKTAEKSEPVKSID) are compositionally biased toward basic and acidic residues. The interval 43 to 78 (LQDDEKTAEKSEPVKSIDHTSTPGATNRTDVGSKAV) is disordered. Residues 61–72 (HTSTPGATNRTD) show a composition bias toward polar residues.

The protein belongs to the TatA/E family. In terms of assembly, the Tat system comprises two distinct complexes: a TatABC complex, containing multiple copies of TatA, TatB and TatC subunits, and a separate TatA complex, containing only TatA subunits. Substrates initially bind to the TatABC complex, which probably triggers association of the separate TatA complex to form the active translocon.

The protein resides in the cell inner membrane. Its function is as follows. Part of the twin-arginine translocation (Tat) system that transports large folded proteins containing a characteristic twin-arginine motif in their signal peptide across membranes. TatA could form the protein-conducting channel of the Tat system. The polypeptide is Sec-independent protein translocase protein TatA (Rhodopseudomonas palustris (strain ATCC BAA-98 / CGA009)).